We begin with the raw amino-acid sequence, 118 residues long: Large ribosomal subunit protein uL22 (118 aa).

The protein belongs to the universal ribosomal protein uL22 family. As to quaternary structure, part of the 50S ribosomal subunit.

This protein binds specifically to 23S rRNA; its binding is stimulated by other ribosomal proteins, e.g. L4, L17, and L20. It is important during the early stages of 50S assembly. It makes multiple contacts with different domains of the 23S rRNA in the assembled 50S subunit and ribosome. Functionally, the globular domain of the protein is located near the polypeptide exit tunnel on the outside of the subunit, while an extended beta-hairpin is found that lines the wall of the exit tunnel in the center of the 70S ribosome. The polypeptide is Large ribosomal subunit protein uL22 (Levilactobacillus brevis (strain ATCC 367 / BCRC 12310 / CIP 105137 / JCM 1170 / LMG 11437 / NCIMB 947 / NCTC 947) (Lactobacillus brevis)).